A 690-amino-acid chain; its full sequence is MPVPTPLSEGTTPDTAAQELRTNRLWEALPGLSYGGDYIPNSGRNRSARKIYRSCRKPECRPSALASSPGLGLEPVEGSYDFTWLDEVMDNLAATGIKVALATATAAPPAGWLRKHPEILPVTAEGSTLGPARAHYLVVGMVLFCRPVCGEDDPRLGERYKDHPALALWHVDNELGCHVSEFYGPRRHRRFPSMAEPTLRHDRGPQRGLGTAFWSQRYSCFEEILTPRPAPTTLNPTQQLDFQRFSSWGLIDFYSMLARGHFARSHPRCPPRQIWWPQAPPCLWDYFDWAKKLECHRQWSLPGGRRYRCVTSELAFRRRSDSEAIAGGKPWSPDGALSPCRPCNWLASQHDSRTPGEMARNSLVHVGRGIWMLSCFSSGDRASRVRRNSTRPWCRTPEPTREYGVKLLSWAQAQSLVRGSRRRGGITHRNRLRLRTLVGKRTGLHPAPMWKYLELLRAFHAPCSCPASPPIWSIPALTLTAMTWWSSRPCTPSPMPRPAILRQRQNAEPQCSSATSVDIDENDAVRLGGYPGAFRDLLGVNVEEFHPLPENSTVSLDAGWSGRIWSEHVHLTGAEAKVSFTEAPLTGVPAVTRHAVGTGAAWYLATFPDATGLESLLDSLIAESGVRAPAMAAAGVELSRRSHADGRSYLFAINHNVTEAAVSAQGTELISGTPFNGTVPAGAVAVIAEG.

Position 173 (Asn-173) interacts with substrate. Glu-174 acts as the Proton donor in catalysis. Trp-345 contacts substrate.

This sequence belongs to the glycosyl hydrolase 42 family.

The enzyme catalyses Hydrolysis of terminal non-reducing beta-D-galactose residues in beta-D-galactosides.. Its activity is regulated as follows. Activity stimulated by beta-mercaptoethanol. Highly specific towards beta-D-galactoside substrates. Hydrolyzes 5-bromo-4-chloro-3-indolyl-beta-D-galactopyranoside (X-Gal) and o-nitrophenyl-beta-D-galactopyranoside (ONPG). Has activity against p-nitrophenyl(pNP)-beta-D-galactoside, but not significantly at all towards pNP-alpha-D-galactoside, pNP-beta-D-glucoside, pNP-beta-D-mannoside, pNP-beta-L-fucoside, pNP-beta-D-xyloside, pNP-beta-L-arabinoside, pNP-beta-D-galuronide, pNP-beta-D-glucuronide, pNP-beta-D-lactoside or pNP-beta-D-cellobioside. The protein is Beta-galactosidase of Arthrobacter sp.